The sequence spans 481 residues: Aspartyl/glutamyl-tRNA(Asn/Gln) amidotransferase subunit B (481 aa).

Residues 29 to 50 (SSSKSSHTDPKNTNISPIDLGH) form a disordered region.

The protein belongs to the GatB/GatE family. GatB subfamily. As to quaternary structure, heterotrimer of A, B and C subunits.

It carries out the reaction L-glutamyl-tRNA(Gln) + L-glutamine + ATP + H2O = L-glutaminyl-tRNA(Gln) + L-glutamate + ADP + phosphate + H(+). The enzyme catalyses L-aspartyl-tRNA(Asn) + L-glutamine + ATP + H2O = L-asparaginyl-tRNA(Asn) + L-glutamate + ADP + phosphate + 2 H(+). In terms of biological role, allows the formation of correctly charged Asn-tRNA(Asn) or Gln-tRNA(Gln) through the transamidation of misacylated Asp-tRNA(Asn) or Glu-tRNA(Gln) in organisms which lack either or both of asparaginyl-tRNA or glutaminyl-tRNA synthetases. The reaction takes place in the presence of glutamine and ATP through an activated phospho-Asp-tRNA(Asn) or phospho-Glu-tRNA(Gln). The sequence is that of Aspartyl/glutamyl-tRNA(Asn/Gln) amidotransferase subunit B from Malacoplasma penetrans (strain HF-2) (Mycoplasma penetrans).